The primary structure comprises 81 residues: Cytotoxin 4N (81 aa).

Residues 1–21 (MKTLLLTLVVVTIVCLDLGYT) form the signal peptide. Cystine bridges form between C24-C42, C35-C59, C63-C74, and C75-C80.

Belongs to the three-finger toxin family. Short-chain subfamily. Type IA cytotoxin sub-subfamily. Monomer in solution; Homodimer and oligomer in the presence of negatively charged lipids forming a pore with a size ranging between 20 and 30 Angstroms. As to expression, expressed by the venom gland.

The protein resides in the secreted. The protein localises to the target cell membrane. Shows cytolytic activity on many different cells by forming pore in lipid membranes. In vivo, increases heart rate or kills the animal by cardiac arrest. In addition, it binds to heparin with high affinity, interacts with Kv channel-interacting protein 1 (KCNIP1) in a calcium-independent manner, and binds to integrin alpha-V/beta-3 (ITGAV/ITGB3) with moderate affinity. The protein is Cytotoxin 4N of Naja atra (Chinese cobra).